A 311-amino-acid polypeptide reads, in one-letter code: MSIKVFGTKEVQDLLKAATNLEGKGGNARSKQIVHRLLSDLFKAIDDLDITPDEVWAGVNYLNKLGQDGEATLLAAGSGLEKYLDIRLDAADKAEGIEGGTPRTIEGPLYVAGATVHDGVSKIDINPDEDAGPLVIHGTVTGPDGKPVAGAVVECWHANSKGFYSHFDPTGAQSDFNLRGAVKTGADGKYEFRTLMPVGYGCPPQGATQQLLNVLGRHGNRPAHVHFFVSSDSARKLTTQFNIEGDPLIWDDFAYATREELIPPVTEKKGGTALGLKADTYKDIEFNLTLTSLVKGKDNQVVHRLRAEVAA.

Residues tyrosine 164, tyrosine 200, histidine 224, and histidine 226 each contribute to the Fe cation site.

The protein belongs to the intradiol ring-cleavage dioxygenase family. In terms of assembly, homodimer. The cofactor is Fe(3+).

It catalyses the reaction catechol + O2 = cis,cis-muconate + 2 H(+). It functions in the pathway aromatic compound metabolism; beta-ketoadipate pathway; 5-oxo-4,5-dihydro-2-furylacetate from catechol: step 1/3. Functionally, can cleave 4-methyl-, 4-chloro-, and 3-methoxycatechol at lower rates than catechol, but has no activity with 4-nitrocatechol or protocatechuic acid. In Acinetobacter lwoffii, this protein is Catechol 1,2-dioxygenase 1 (catA1).